The following is a 308-amino-acid chain: MITILGAGKVGMATAVMLMMRGYDDLLLIARTPGKPQGEALDLAHAAAELGVDIRISGSNSYEDMRGSDIVLVTAGIGRKPGMTREQLLEANANTMADLAEKIKAYAKDAIVVITTNPVDAMTYVMYKKTGFPRERVIGFSGILDSARMAYYISQKLGVSFKSVNAIVLGMHGQKMFPVPRLSSVGGVPLEHLMSKEEIEEVVSETVNAGAKITELRGYSSNYGPAAGLVLTVEAIKRDSKRIYPYSLYLQGEYGYNDIVAEVPAVIGKSGIERIIELPLTEDEKRKFDEAVQAVKKLVETLPPQLRE.

6 to 11 (GAGKVG) lines the NADP(+) pocket. The substrate site is built by arginine 79 and arginine 85. Residues asparagine 92 and 115–117 (TTN) each bind NADP(+). The substrate site is built by asparagine 117 and arginine 148. Histidine 172 acts as the Proton acceptor in catalysis.

This sequence belongs to the LDH/MDH superfamily. Homotetramer.

It carries out the reaction (S)-malate + NADP(+) = oxaloacetate + NADPH + H(+). It catalyses the reaction (S)-malate + NAD(+) = oxaloacetate + NADH + H(+). Catalyzes the reversible oxidation of malate to oxaloacetate. Can also oxidize tartrate. Can utilize both NAD and NADP. Catalytic efficiency for malate oxidation is 3-fold higher with NADP. The chain is Malate dehydrogenase (mdh) from Aeropyrum pernix (strain ATCC 700893 / DSM 11879 / JCM 9820 / NBRC 100138 / K1).